Reading from the N-terminus, the 310-residue chain is Proline-rich 28 kDa antigen (310 aa).

Residues Met1 to Ala32 form the signal peptide. The interval Gln278–Arg310 is disordered.

This sequence to M.leprae ML0031.

This chain is Proline-rich 28 kDa antigen (mtc28), found in Mycobacterium bovis (strain ATCC BAA-935 / AF2122/97).